Here is a 276-residue protein sequence, read N- to C-terminus: tRNA dimethylallyltransferase (276 aa).

The tract at residues 9 to 12 (DSLS) is interaction with substrate tRNA.

It belongs to the IPP transferase family. Monomer. It depends on Mg(2+) as a cofactor.

It carries out the reaction adenosine(37) in tRNA + dimethylallyl diphosphate = N(6)-dimethylallyladenosine(37) in tRNA + diphosphate. Its function is as follows. Catalyzes the transfer of a dimethylallyl group onto the adenine at position 37 in tRNAs that read codons beginning with uridine, leading to the formation of N6-(dimethylallyl)adenosine (i(6)A). This Helicobacter pylori (strain HPAG1) protein is tRNA dimethylallyltransferase (miaA).